The chain runs to 407 residues: RNA-binding motif, single-stranded-interacting protein 2 (407 aa).

Residue Met-1 is modified to N-acetylmethionine. Residues Phe-14–Asp-51 are disordered. A compositionally biased stretch (low complexity) spans Ser-37 to Ser-47. RRM domains are found at residues Thr-56 to Gln-129 and Thr-135 to Gly-220. Ser-106 bears the Phosphoserine mark. Residues Ser-280 and Ser-285 each carry the phosphoserine modification. Positions Pro-374–Val-392 are enriched in low complexity. A disordered region spans residues Pro-374 to His-398.

The protein resides in the nucleus. This Bos taurus (Bovine) protein is RNA-binding motif, single-stranded-interacting protein 2 (RBMS2).